Here is a 93-residue protein sequence, read N- to C-terminus: Putative pterin-4-alpha-carbinolamine dehydratase (93 aa).

It belongs to the pterin-4-alpha-carbinolamine dehydratase family.

It carries out the reaction (4aS,6R)-4a-hydroxy-L-erythro-5,6,7,8-tetrahydrobiopterin = (6R)-L-erythro-6,7-dihydrobiopterin + H2O. The chain is Putative pterin-4-alpha-carbinolamine dehydratase from Nostoc punctiforme (strain ATCC 29133 / PCC 73102).